The following is a 549-amino-acid chain: Cation/acetate symporter ActP (549 aa).

The next 13 helical transmembrane spans lie at 33 to 53 (WQAIIMFLIFVVFTLGITYWA), 77 to 97 (LAIAGDYMSAASFLGISALVF), 103 to 123 (GLIYSLGFLVGWPIILFLIAE), 148 to 168 (ILSACGSLVVVALYLIAQMVG), 183 to 203 (IAVVLVGVLMMMYVLFGGMLA), 206 to 226 (WVQIIKAVLLLFGASFMAFMV), 262 to 282 (ISALSLGLGLMFGTAGLPHIL), 303 to 323 (GFMGYFYILTFIIGFGAIMLV), 355 to 375 (LFLGFISAVAFATILAVVAGL), 404 to 424 (VSKITVLILGVIAIILGVLFE), 428 to 448 (IAFMVGLAFAIAASCNFPIIL), 464 to 484 (GGWLGLITAVVLMILGPTIWV), and 493 to 513 (IFPYEYPALFSITVAFLGIWF).

It belongs to the sodium:solute symporter (SSF) (TC 2.A.21) family.

The protein localises to the cell inner membrane. Functionally, transports acetate. This chain is Cation/acetate symporter ActP, found in Escherichia fergusonii (strain ATCC 35469 / DSM 13698 / CCUG 18766 / IAM 14443 / JCM 21226 / LMG 7866 / NBRC 102419 / NCTC 12128 / CDC 0568-73).